A 1396-amino-acid chain; its full sequence is MKALLDLFKQVTQEEEFDAIKIGIASPDKIRSWSYGEVKKPETINYRTFKPERDGLFCARIFGPVKDYECLCGKYKRLKHRGVICEKCGVEVTLSKVRRERMGHIELASPTAHIWFLKSLPSRLGMVLDMTLRDIERVLYFEAYVVTDPGMTPMQYRQLLTEEDFLDKEDQYGEEFVAMMGAEAVKELLKKLDLDAEIEGLRRELETTNSDTKIKKIAKRLKVLEAFQRSGMKPEWMILEVLPVLPPELRPLVPLDGGRFATSDLNDLYRRVINRNNRLKRLLELRAPDIIVRNEKRMLQESVDSLLDNGRRGKAMTGANKRPLKSLADMIKGKGGRFRQNLLGKRVDYSGRSVITVGPTLRLHQCGLPKKMALELFKPFIFHKLEVMGLASTIKAAKKLVEQEVPEVWDILEEVIREHPVLLNRAPTLHRLGIQAFEPVLIEGKAIQLHPLVCAAFNADFDGDQMAVHVPLSLEAQMEARTLMLATNNVLSPANGEPIIVPSQDIVLGLYYMTRDKVNGKGEGMVFADTKEVHRAYETRQVELATRITVRLKEWEKDEQGEFQPVIKRYNTTVGRAILSDILPKGLPFEHINKALKKKEISKLINVSFRRCGIRDTVIFADQLMYTGFAYSTRGGISICVDDMQIPVKKSELLGEANKEVKEIEEQYRQGLVTQGERYNKVVDIWGRTGDKIAKAMMDELSKQKVLDREGKEVDQESFNSIYMMADSGARGSAAQIKQLAGMRGLMAKPDGSIIETPITANFREGLTVLQYFISTHGARKGLADTALKTANSGYLTRRLVDVTQDLVVIEDDCGTSNGFTMKAVLQGGDVIEALRDRILGRVTAVDVVDPSTGETVIEAGTLMDEHLVDLVDSLGIDEVKVRTAITCDTRYGLCAKCYGRDLARGKQVNAGEAIGVIAAQSIGEPGTQLTMRTFHIGGAASRNAAASQVEGKSNGTVRFSSQMRYVANTKGELIVITRSGEVVIHDDMGRERERRKVPYGATLMVTDGLQIKAGAVLATWDPHTRPIITEYAGRVKFENVEEGNTVAKQTDEVTGLSTLVVIDPKRRAGSQSKMLRPLVKLLDDNGNEVKLAGSDASVSITFQVGAIITVRDGQDVGKGEVLARIPQESSKTRDITGGLPRVAELFEARSPKDAGMLAEVTGTVSFGKDTKGKQRLIITDLEGNGYENLIPKDKHVLVHDGQVVNRGESIVDGPVDPHDILRLQGIEALARYIVQEVQEVYRLQGVKINDKHIEVIIRQMLRRVIITDSGDTEFIQGEQVERADVLEMNDKMMAENKEPAQYENVLLGITKASLSTDSFISAASFQETTRVLTEAAIMGKRDDLRGLKENVIVGRLIPAGTGLAYHRTRRRQNLGLDAGESMLFDPAPAALESGE.

Residues Cys-70, Cys-72, Cys-85, and Cys-88 each contribute to the Zn(2+) site. Asp-460, Asp-462, and Asp-464 together coordinate Mg(2+). Cys-814, Cys-888, Cys-895, and Cys-898 together coordinate Zn(2+).

This sequence belongs to the RNA polymerase beta' chain family. In terms of assembly, the RNAP catalytic core consists of 2 alpha, 1 beta, 1 beta' and 1 omega subunit. When a sigma factor is associated with the core the holoenzyme is formed, which can initiate transcription. Mg(2+) serves as cofactor. Zn(2+) is required as a cofactor.

The enzyme catalyses RNA(n) + a ribonucleoside 5'-triphosphate = RNA(n+1) + diphosphate. In terms of biological role, DNA-dependent RNA polymerase catalyzes the transcription of DNA into RNA using the four ribonucleoside triphosphates as substrates. This chain is DNA-directed RNA polymerase subunit beta', found in Chromobacterium violaceum (strain ATCC 12472 / DSM 30191 / JCM 1249 / CCUG 213 / NBRC 12614 / NCIMB 9131 / NCTC 9757 / MK).